We begin with the raw amino-acid sequence, 601 residues long: Potassium channel KAT2 (601 aa).

Topologically, residues 1–42 (METISNIFHNDPLPPLGARANQSIKLRKFIISPYDSRYRTWE) are cytoplasmic. Residues 43-63 (TFLLVLVVYSAWICPFELAYL) traverse the membrane as a helical segment. Residues 64 to 71 (RNLSWKVS) are Extracellular-facing. A helical transmembrane segment spans residues 72–92 (LVDNIIDSFFAIDIILTFFLA). Over 93–112 (YLDQKSYLLVDDPKRIVARY) the chain is Cytoplasmic. The chain crosses the membrane as a helical span at residues 113 to 133 (FSSWFLFDVCSTIPYQLLGQI). Topologically, residues 134 to 144 (FKKHENGLAYR) are extracellular. A helical; Voltage-sensor transmembrane segment spans residues 145-165 (LLSMLRLWRLRRLSELFARLE). The Cytoplasmic segment spans residues 166–179 (KDIRLNYYWIRCTK). The helical transmembrane segment at 180 to 200 (LISVTLFAVHCSGCFNYLIAD) threads the bilayer. Residues 201–227 (RYPNPARTWIGAAIPNYRSQNLWVRYV) are Extracellular-facing. Residues 228–247 (TAIYWSITTLTTTGYGDLHA) constitute an intramembrane region (pore-forming). Residues 248 to 251 (ENQR) lie on the Extracellular side of the membrane. A helical membrane pass occupies residues 252 to 272 (EMLFSICYMLFNLGLTAYLIG). Residues 273–601 (NMTNLVVQGS…DGDHLFFMEI (329 aa)) lie on the Cytoplasmic side of the membrane. 356-475 (LFHGVSFTCM…RVILNNLSQK (120 aa)) contributes to the a nucleoside 3',5'-cyclic phosphate binding site. In terms of domain architecture, KHA spans 530–601 (RVTIHMYSQR…DGDHLFFMEI (72 aa)).

This sequence belongs to the potassium channel family. Plant (TC 1.A.1.4) subfamily.

The protein localises to the membrane. In terms of biological role, probable inward-rectifying potassium channel. Assuming opened or closed conformations in response to the voltage difference across the membrane, the channel is activated by hyperpolarization. The sequence is that of Potassium channel KAT2 from Oryza sativa subsp. japonica (Rice).